A 64-amino-acid polypeptide reads, in one-letter code: Alpha-conotoxin-like Ai1.2 (64 aa).

Positions 1–17 (MFTVFLLVVLATTVVSS) are cleaved as a signal peptide. A propeptide spanning residues 18–43 (TSGRRAFRGRNAAAKASGLVGLTDRR) is cleaved from the precursor. 2 disulfide bridges follow: Cys46–Cys52 and Cys47–Cys60. The tract at residues 48 to 50 (SDP) is ser-Xaa-Pro motif, crucial for potent interaction with nAChR. Residue Gly61 is modified to Glycine amide.

It belongs to the conotoxin A superfamily. As to expression, expressed by the venom duct.

Its subcellular location is the secreted. Functionally, alpha-conotoxins act on postsynaptic membranes, they bind to the nicotinic acetylcholine receptors (nAChR) and thus inhibit them. This Conus ammiralis (Admiral cone) protein is Alpha-conotoxin-like Ai1.2.